Here is a 275-residue protein sequence, read N- to C-terminus: MKARFDKIYKDIVDTIAEKGIWSEGNVRTKYADGTAAHYKSYIGYQFRLDNSDDEAHLITSRFAPSKAPIRELYWIWILQSNNVDVLNELGCKFWDEWKMQDGTIGKAYGYQIAQETFGQKSQLHYVINELKKNPNSRRIMTEIWIPNELSEMALTPCVHLTQWSVIGNKLYLEVRQRSCDVALGLVANVFQYSVLHKLVALECGLEPAEIIWNIHNMHIYDRHYDKLIEQVNRETFEPAKIKINNFKSIFDFKPDDIEIIDYKYGEKVSYEVAI.

DUMP is bound at residue 138–139; sequence RR. Residue Cys158 is the Nucleophile of the active site. Residues 178 to 181, Asn189, and 219 to 221 each bind dUMP; these read RSCD and HIY. Asp181 contributes to the (6R)-5,10-methylene-5,6,7,8-tetrahydrofolate binding site. Residue Ala274 coordinates (6R)-5,10-methylene-5,6,7,8-tetrahydrofolate.

This sequence belongs to the thymidylate synthase family. Bacterial-type ThyA subfamily. As to quaternary structure, homodimer.

It is found in the cytoplasm. The enzyme catalyses dUMP + (6R)-5,10-methylene-5,6,7,8-tetrahydrofolate = 7,8-dihydrofolate + dTMP. Its pathway is pyrimidine metabolism; dTTP biosynthesis. Its function is as follows. Catalyzes the reductive methylation of 2'-deoxyuridine-5'-monophosphate (dUMP) to 2'-deoxythymidine-5'-monophosphate (dTMP) while utilizing 5,10-methylenetetrahydrofolate (mTHF) as the methyl donor and reductant in the reaction, yielding dihydrofolate (DHF) as a by-product. This enzymatic reaction provides an intracellular de novo source of dTMP, an essential precursor for DNA biosynthesis. This is Thymidylate synthase from Fusobacterium nucleatum subsp. nucleatum (strain ATCC 25586 / DSM 15643 / BCRC 10681 / CIP 101130 / JCM 8532 / KCTC 2640 / LMG 13131 / VPI 4355).